The sequence spans 375 residues: Vasculin (375 aa).

Disordered stretches follow at residues 49-109 (SSDA…TSEI) and 356-375 (DSVQKEDSETSSSSDTSDDE). Positions 96-108 (MKSQLHSENNTSE) are enriched in polar residues. A compositionally biased stretch (low complexity) spans 365-375 (TSSSSDTSDDE).

This sequence belongs to the vasculin family.

The protein resides in the nucleus. Its function is as follows. Functions as a GC-rich promoter-specific transactivating transcription factor. The polypeptide is Vasculin (gpbp1) (Xenopus tropicalis (Western clawed frog)).